Here is a 103-residue protein sequence, read N- to C-terminus: Cell division protein FtsB (103 aa).

Residues 1–3 (MGK) are Cytoplasmic-facing. Residues 4–21 (LTLLLLALLVWLQYSLWF) form a helical membrane-spanning segment. The Periplasmic segment spans residues 22-103 (GKNGIHDYSR…RAGGPAQNNR (82 aa)). Residues 38-62 (VQQATNAKLKARNDQLFAEIDDLNG) adopt a coiled-coil conformation.

Belongs to the FtsB family. Part of a complex composed of FtsB, FtsL and FtsQ.

The protein localises to the cell inner membrane. Essential cell division protein. May link together the upstream cell division proteins, which are predominantly cytoplasmic, with the downstream cell division proteins, which are predominantly periplasmic. This Cronobacter sakazakii (strain ATCC BAA-894) (Enterobacter sakazakii) protein is Cell division protein FtsB.